Reading from the N-terminus, the 522-residue chain is TNF receptor-associated factor 6 (522 aa).

The segment at Met1–Ile354 is interaction with TAX1BP1. The segment at Cys70–Asn109 adopts an RING-type zinc-finger fold. Residue Lys124 forms a Glycyl lysine isopeptide (Lys-Gly) (interchain with G-Cter in SUMO); alternate linkage. Lys124 is covalently cross-linked (Glycyl lysine isopeptide (Lys-Gly) (interchain with G-Cter in ubiquitin); alternate). Lys142 is covalently cross-linked (Glycyl lysine isopeptide (Lys-Gly) (interchain with G-Cter in SUMO)). 2 TRAF-type zinc fingers span residues Asp150–Glu202 and Ile203–Ala259. Residues Tyr288–Gln348 adopt a coiled-coil conformation. Lys319 is covalently cross-linked (Glycyl lysine isopeptide (Lys-Gly) (interchain with G-Cter in ubiquitin)). An MATH domain is found at Asn350–Val499. The tract at residues Trp355–Val522 is interaction with TANK. Lys453 participates in a covalent cross-link: Glycyl lysine isopeptide (Lys-Gly) (interchain with G-Cter in SUMO).

This sequence belongs to the TNF receptor-associated factor family. A subfamily. Homotrimer. Homooligomer. N-terminal region is dimeric while C-terminal region is trimeric; maybe providing a mode of oligomerization. Upon IL1B treatment, forms a complex with PELI1, IRAK1, IRAK4 and MYD88; this complex recruits MAP3K7/TAK1, TAB1 and TAB2 to mediate NF-kappa-B activation. Direct binding of SMAD6 to PELI1 prevents the complex formation and hence negatively regulates IL1R-TLR signaling and eventually NF-kappa-B-mediated gene expression. Binds to TNFRSF5/CD40 and TNFRSF11A/RANK. Associates with NGFR, TNFRSF17, IRAK2, IRAK3, RIPK2, MAP3K1, MAP3K5, MAP3K14, CSK, TRAF, TRAF-interacting protein TRIP and TNF receptor associated protein TDP2. Interacts with IL17R. Interacts with SQSTM1 bridging NTRK1 and NGFR. Forms a ternary complex with SQSTM1 and PRKCZ. Interacts with PELI2 and PELI3. Binds UBE2V1. Interacts with TAX1BP1; this interaction mediates deubiquitination of TRAF6 and inhibition of NF-kappa-B activation. Interacts with ZNF675. Interacts with ARRB1 and ARRB2. Interacts with MAP3K7 and TAB1/MAP3K7IP1; during IL-1 signaling. Interacts with UBE2N. Interacts with TGFBR1, HDAC1 and RANGAP1. Interacts with AKT1, AKT2 and AKT3. Interacts (via TRAF domains) with NUMBL (via C-terminal). Interacts with RBCK1. Interacts with LIMD1 (via LIM domains). Interacts with RSAD2/viperin. Interacts (via C-terminus) with EIF2AK2/PKR (via the kinase catalytic domain). Interacts with ZFAND5. Interacts with IL1RL1. Interacts with TRAFD1. Interacts with AJUBA. Interacts with MAVS/IPS1. Interacts (via TRAF domains) with DYNC2I2 (via WD domains). Interacts with IFIT3 (via N-terminus). Interacts with TICAM2. Interacts with CARD14. Interacts with CD40 and MAP3K8; the interaction is required for ERK activation. Interacts with TICAM1 and this interaction is enhanced in the presence of WDFY1. Interacts with TANK; this interaction increases in response to DNA damage. Interacts with USP10; this interaction increases in response to DNA damage. Interacts with ZC3H12A; this interaction increases in response to DNA damage and is stimulated by TANK. Interacts with WDFY3. Interacts with TRIM13. Interacts with GPS2. Interacts (via C-terminus) with SASH1. Interacts with LRRC19. Interacts with IL17RA and TRAF3IP2. Interacts with TOMM70. Interacts with AMBRA1; interaction is required to mediate 'Lys-63'-linked ubiquitination of ULK1. Interacts with CRBN; this interaction inhibits TLR4-mediated signaling by preventing TRAF6-mediated ubiquitination of ECSIT. Post-translationally, sumoylated on Lys-124, Lys-142 and Lys-453 with SUMO1. Polyubiquitinated on Lys-124 by TRAF3IP2; after cell stimulation with IL17A. Polyubiquitinated on Lys-124; after cell stimulation with IL1B or TGFB. This ligand-induced cell stimulation leads to dimerization/oligomerization of TRAF6 molecules, followed by auto-ubiquitination which involves UBE2N and UBE2V1 and leads to TRAF6 activation. This 'Lys-63' site-specific poly-ubiquitination appears to be associated with the activation of signaling molecules. Endogenous autoubiquitination occurs only for the cytoplasmic form. Deubiquitinated by USP10 in a TANK-dependent manner, leading to the negative regulation of NF-kappaB signaling upon DNA damage. LRRC19 induces 'Lys-63' ubiquitination. Ubiquitinated at Lys-319 by the SCF(FBXL2) complex, leading to its degradation by the proteasome. In terms of processing, (Microbial infection) Deubiquitinated by Epstein-Barr virus BPLF1 on both 'Lys-48' and 'Lys-63'-linked ubiquitin chains; leading to NF-kappa-B signaling inhibition. As to expression, expressed in heart, brain, placenta, lung, liver, skeletal muscle, kidney and pancreas.

Its subcellular location is the cytoplasm. It localises to the cell cortex. It is found in the nucleus. The protein resides in the lipid droplet. It carries out the reaction S-ubiquitinyl-[E2 ubiquitin-conjugating enzyme]-L-cysteine + [acceptor protein]-L-lysine = [E2 ubiquitin-conjugating enzyme]-L-cysteine + N(6)-ubiquitinyl-[acceptor protein]-L-lysine.. It participates in protein modification; protein ubiquitination. Functionally, E3 ubiquitin ligase that, together with UBE2N and UBE2V1, mediates the synthesis of 'Lys-63'-linked-polyubiquitin chains conjugated to proteins, such as ECSIT, IKBKG, IRAK1, AKT1 and AKT2. Also mediates ubiquitination of free/unanchored polyubiquitin chain that leads to MAP3K7 activation. Leads to the activation of NF-kappa-B and JUN. Seems to also play a role in dendritic cells (DCs) maturation and/or activation. Represses c-Myb-mediated transactivation, in B-lymphocytes. Adapter protein that seems to play a role in signal transduction initiated via TNF receptor, IL-1 receptor and IL-17 receptor. Regulates osteoclast differentiation by mediating the activation of adapter protein complex 1 (AP-1) and NF-kappa-B, in response to RANK-L stimulation. Together with MAP3K8, mediates CD40 signals that activate ERK in B-cells and macrophages, and thus may play a role in the regulation of immunoglobulin production. Acts as a regulator of the JNK and NF-kappa-B signaling pathways by initiating assembly of heterotypic 'Lys-63'-/'Lys-48'-linked branched ubiquitin chains that are then recognized by TAB2: TRAF6 catalyzes initial 'Lys-63'-linked-polyubiquitin chains that are then branched via 'Lys-48'-linked polyubiquitin by HUWE1. 'Lys-63'-/'Lys-48'-linked branched ubiquitin chains protect 'Lys-63'-linkages from CYLD deubiquitination. Participates also in the TCR signaling by ubiquitinating LAT. This Homo sapiens (Human) protein is TNF receptor-associated factor 6 (TRAF6).